A 118-amino-acid polypeptide reads, in one-letter code: Putative pterin-4-alpha-carbinolamine dehydratase (118 aa).

The protein belongs to the pterin-4-alpha-carbinolamine dehydratase family.

It carries out the reaction (4aS,6R)-4a-hydroxy-L-erythro-5,6,7,8-tetrahydrobiopterin = (6R)-L-erythro-6,7-dihydrobiopterin + H2O. The chain is Putative pterin-4-alpha-carbinolamine dehydratase from Pseudomonas savastanoi pv. phaseolicola (strain 1448A / Race 6) (Pseudomonas syringae pv. phaseolicola (strain 1448A / Race 6)).